The chain runs to 288 residues: Elongation factor Ts (288 aa).

The segment at 79–82 is involved in Mg(2+) ion dislocation from EF-Tu; it reads TDFV.

It belongs to the EF-Ts family.

It is found in the cytoplasm. Associates with the EF-Tu.GDP complex and induces the exchange of GDP to GTP. It remains bound to the aminoacyl-tRNA.EF-Tu.GTP complex up to the GTP hydrolysis stage on the ribosome. This chain is Elongation factor Ts, found in Ehrlichia canis (strain Jake).